The chain runs to 254 residues: Type III pantothenate kinase (254 aa).

6–13 (DVGNTNTV) is an ATP binding site. Residues Tyr-100 and 107-110 (GADR) contribute to the substrate site. Asp-109 serves as the catalytic Proton acceptor. Asp-129 serves as a coordination point for K(+). Residue Thr-132 coordinates ATP. Thr-184 lines the substrate pocket.

This sequence belongs to the type III pantothenate kinase family. Homodimer. It depends on NH4(+) as a cofactor. K(+) serves as cofactor.

The protein localises to the cytoplasm. It carries out the reaction (R)-pantothenate + ATP = (R)-4'-phosphopantothenate + ADP + H(+). It functions in the pathway cofactor biosynthesis; coenzyme A biosynthesis; CoA from (R)-pantothenate: step 1/5. Its function is as follows. Catalyzes the phosphorylation of pantothenate (Pan), the first step in CoA biosynthesis. The sequence is that of Type III pantothenate kinase from Halalkalibacterium halodurans (strain ATCC BAA-125 / DSM 18197 / FERM 7344 / JCM 9153 / C-125) (Bacillus halodurans).